The primary structure comprises 337 residues: Movement protein (337 aa).

The span at 1-11 (MAGLWRSNSTL) shows a compositional bias: polar residues. 2 disordered regions span residues 1–24 (MAGL…QTET) and 273–337 (SVVR…VRQT).

The protein resides in the host cell junction. It is found in the host plasmodesma. In terms of biological role, transports viral genome to neighboring plant cells directly through plasmosdesmata, without any budding. The movement protein allows efficient cell to cell propagation, by bypassing the host cell wall barrier. Acts by forming a tubular structure at the host plasmodesmata, enlarging it enough to allow free passage of virion capsids. The polypeptide is Movement protein (Olive latent virus 2 (isolate Italy) (OLV-2)).